Consider the following 313-residue polypeptide: Ribosomal RNA small subunit methyltransferase H (313 aa).

S-adenosyl-L-methionine-binding positions include 33–35 (AGH), aspartate 53, phenylalanine 82, aspartate 103, and glutamine 110.

Belongs to the methyltransferase superfamily. RsmH family.

The protein localises to the cytoplasm. The enzyme catalyses cytidine(1402) in 16S rRNA + S-adenosyl-L-methionine = N(4)-methylcytidine(1402) in 16S rRNA + S-adenosyl-L-homocysteine + H(+). Functionally, specifically methylates the N4 position of cytidine in position 1402 (C1402) of 16S rRNA. The polypeptide is Ribosomal RNA small subunit methyltransferase H (Ruminiclostridium cellulolyticum (strain ATCC 35319 / DSM 5812 / JCM 6584 / H10) (Clostridium cellulolyticum)).